The chain runs to 893 residues: 104 kDa microneme/rhoptry antigen (893 aa).

Positions 1–19 (MKFLVLLFNILCLFPILGA) are cleaved as a signal peptide. Disordered regions lie at residues 492–666 (SKKK…FDPK), 681–799 (KTKE…PTGK), and 818–873 (KEHM…RKPD). 2 stretches are compositionally biased toward basic and acidic residues: residues 525 to 565 (SESK…EHKP) and 573 to 591 (KRPE…ESPK). The span at 595–606 (RPVSPQRPVSPK) shows a compositional bias: low complexity. 3 stretches are compositionally biased toward basic and acidic residues: residues 731 to 755 (EEVK…DSPT), 788 to 797 (EAGRILRDPT), and 818 to 830 (KEHM…KIVV). Positions 831–841 (DDDGTEADDED) are enriched in acidic residues. Over residues 851 to 869 (STVRRRRPRPKKSSKSSKP) the composition is skewed to basic residues. Residue D873 is the site of GPI-anchor amidated aspartate attachment. Positions 874 to 893 (SAFVPSIIFIFLVSLIVGIL) are cleaved as a propeptide — removed in mature form.

It localises to the cell membrane. This is 104 kDa microneme/rhoptry antigen from Theileria annulata.